Here is a 430-residue protein sequence, read N- to C-terminus: Enolase (430 aa).

Glutamine 167 is a (2R)-2-phosphoglycerate binding site. Glutamate 209 acts as the Proton donor in catalysis. Residues aspartate 245, glutamate 286, and aspartate 313 each contribute to the Mg(2+) site. Residues lysine 338, arginine 367, serine 368, and lysine 389 each coordinate (2R)-2-phosphoglycerate. Catalysis depends on lysine 338, which acts as the Proton acceptor.

This sequence belongs to the enolase family. Requires Mg(2+) as cofactor.

It is found in the cytoplasm. The protein localises to the secreted. It localises to the cell surface. It catalyses the reaction (2R)-2-phosphoglycerate = phosphoenolpyruvate + H2O. It participates in carbohydrate degradation; glycolysis; pyruvate from D-glyceraldehyde 3-phosphate: step 4/5. Functionally, catalyzes the reversible conversion of 2-phosphoglycerate (2-PG) into phosphoenolpyruvate (PEP). It is essential for the degradation of carbohydrates via glycolysis. This is Enolase from Synechococcus sp. (strain CC9605).